A 215-amino-acid chain; its full sequence is MTSRSTARPNGQPQASKICQFKLVLLGESAVGKSSLVLRFVKGQFHEYQESTIGAAFLTQSVCLDDTTVKFEIWDTAGQERYHSLAPMYYRGAQAAIVVYDITNQETFARAKTWVKELQRQASPSIVIALAGNKADLANKRMVEYEEAQAYADDNSLLFMETSAKTAMNVNDLFLAIAKKLPKSEPQNLGGAAGRSRGVDLHEQSQQNKSQCCSN.

Thr2 carries the N-acetylthreonine modification. GTP-binding residues include Ser29, Ala30, Gly32, Lys33, Ser34, Ser35, His46, Glu47, Thr52, and Gly78. Residue Ser34 participates in Mg(2+) binding. 2 consecutive short sequence motifs (switch) follow at residues Gln44–Ala56 and Ala77–Ala93. Mg(2+) is bound at residue Thr52. Ser84 carries the phosphoserine; by LRRK2 modification. GTP is bound by residues Asn133, Lys134, Asp136, Ala164, and Lys165. The segment at Pro186 to Asn215 is disordered. Positions Gln204–Asn215 are enriched in low complexity. S-geranylgeranyl cysteine attachment occurs at residues Cys212 and Cys213.

It belongs to the small GTPase superfamily. Rab family. Binds EEA1. Interacts with RIN2 and RIN3, which probably regulate its pathway, possibly by acting as GEFs. Interacts with GDI1, GDI2, CHML and CHM; phosphorylation at Ser-84 disrupts this interaction. It depends on Mg(2+) as a cofactor. Post-translationally, phosphorylation of Ser-84 in the switch II region by LRRK2 prevents the association of RAB regulatory proteins, including CHM, CHML and RAB GDP dissociation inhibitors GDI1 and GDI2. (Microbial infection) Glycosylated on arginine residues by S.typhimurium protein Ssek3.

It localises to the cell membrane. The protein resides in the early endosome membrane. The protein localises to the melanosome. It carries out the reaction GTP + H2O = GDP + phosphate + H(+). Regulated by guanine nucleotide exchange factors (GEFs) which promote the exchange of bound GDP for free GTP. Regulated by GTPase activating proteins (GAPs) which increase the GTP hydrolysis activity. Inhibited by GDP dissociation inhibitors (GDIs). The small GTPases Rab are key regulators of intracellular membrane trafficking, from the formation of transport vesicles to their fusion with membranes. Rabs cycle between an inactive GDP-bound form and an active GTP-bound form that is able to recruit to membranes different sets of downstream effectors directly responsible for vesicle formation, movement, tethering and fusion. The protein is Ras-related protein Rab-5B of Homo sapiens (Human).